Consider the following 184-residue polypeptide: Trichothecene 15-O-acetyltransferase SAT16 (184 aa).

Residue His154 coordinates substrate.

This sequence belongs to the trichothecene O-acetyltransferase family.

It participates in mycotoxin biosynthesis. In terms of biological role, trichothecene 15-O-acetyltransferase; part of the satratoxin SC2 cluster involved in the biosynthesis of satratoxins, trichothecene mycotoxins that are associated with human food poisonings. Satratoxins are suggested to be made by products of multiple gene clusters (SC1, SC2 and SC3) that encode 21 proteins in all, including polyketide synthases, acetyltransferases, and other enzymes expected to modify the trichothecene skeleton. SC1 encodes 10 proteins, SAT1 to SAT10. The largest are SAT8, which encodes a putative polyketide synthase (PKS) with a conventional non-reducing architecture, and SAT10, a putative protein containing four ankyrin repeats and thus may be involved in protein scaffolding. The putative short-chain reductase SAT3 may assist the PKS in some capacity. SAT6 contains a secretory lipase domain and acts probably as a trichothecene esterase. SAT5 encodes a putative acetyltransferase, and so, with SAT6, may affect endogenous protection from toxicity. The probable transcription factor SAT9 may regulate the expression of the SC1 cluster. SC2 encodes proteins SAT11 to SAT16, the largest of which encodes the putative reducing PKS SAT13. SAT11 is a cytochrome P450 monooxygenase, while SAT14 and SAT16 are probable acetyltransferases. The SC2 cluster may be regulated by the transcription factor SAT15. SC3 is a small cluster that encodes 5 proteins, SAT17 to SAT21. SAT21 is a putative MFS-type transporter which may have a role in exporting secondary metabolites. The four other proteins putatively encoded in SC3 include the taurine hydroxylase-like protein SAT17, the O-methyltransferase SAT18, the acetyltransferase SAT19, and the Cys6-type zinc finger SAT20, the latter being probably involved in regulation of SC3 expression. This Stachybotrys chartarum (strain CBS 109288 / IBT 7711) (Toxic black mold) protein is Trichothecene 15-O-acetyltransferase SAT16.